Consider the following 396-residue polypeptide: S-adenosylmethionine synthase (396 aa).

His16 contacts ATP. Asp18 contributes to the Mg(2+) binding site. Glu44 contacts K(+). L-methionine is bound by residues Glu57 and Gln100. The tract at residues 100–110 is flexible loop; it reads QSPDIAQGVDR. ATP is bound by residues 167-169, 233-234, Asp242, 248-249, Ala265, and Lys269; these read DAK, RF, and RK. Asp242 is a binding site for L-methionine. Lys273 contacts L-methionine.

The protein belongs to the AdoMet synthase family. As to quaternary structure, homotetramer; dimer of dimers. Mg(2+) is required as a cofactor. The cofactor is K(+).

The protein localises to the cytoplasm. The enzyme catalyses L-methionine + ATP + H2O = S-adenosyl-L-methionine + phosphate + diphosphate. The protein operates within amino-acid biosynthesis; S-adenosyl-L-methionine biosynthesis; S-adenosyl-L-methionine from L-methionine: step 1/1. Functionally, catalyzes the formation of S-adenosylmethionine (AdoMet) from methionine and ATP. The overall synthetic reaction is composed of two sequential steps, AdoMet formation and the subsequent tripolyphosphate hydrolysis which occurs prior to release of AdoMet from the enzyme. This is S-adenosylmethionine synthase from Paraburkholderia phytofirmans (strain DSM 17436 / LMG 22146 / PsJN) (Burkholderia phytofirmans).